We begin with the raw amino-acid sequence, 412 residues long: Regulator of microtubule dynamics protein 2 (412 aa).

The helical transmembrane segment at 9–28 (LLLGIMAGTAGISLLVLWYH) threads the bilayer. A Phosphoserine modification is found at serine 51. Residues 72-110 (QLQILEKLNELLTNVEELKEEIKFLKETIPKLEECIQDE) are a coiled coil. Serine 121 carries the post-translational modification Phosphoserine. Residues 122 to 153 (PQHRARKKKTTTTTVQRPATSNSSEEAESEGG) form a disordered region. The residue at position 141 (threonine 141) is a Phosphothreonine. The residue at position 154 (tyrosine 154) is a Phosphotyrosine. Phosphothreonine is present on residues threonine 156 and threonine 159.

Belongs to the RMDN family. Interacts with microtubules.

It localises to the membrane. The protein localises to the cytoplasm. The protein resides in the cytoskeleton. Its subcellular location is the spindle. It is found in the spindle pole. The protein is Regulator of microtubule dynamics protein 2 (Rmdn2) of Rattus norvegicus (Rat).